Consider the following 479-residue polypeptide: Glycogen synthase (479 aa).

K15 contributes to the ADP-alpha-D-glucose binding site.

It belongs to the glycosyltransferase 1 family. Bacterial/plant glycogen synthase subfamily.

The catalysed reaction is [(1-&gt;4)-alpha-D-glucosyl](n) + ADP-alpha-D-glucose = [(1-&gt;4)-alpha-D-glucosyl](n+1) + ADP + H(+). It functions in the pathway glycan biosynthesis; glycogen biosynthesis. Its function is as follows. Synthesizes alpha-1,4-glucan chains using ADP-glucose. The sequence is that of Glycogen synthase from Clostridium beijerinckii (strain ATCC 51743 / NCIMB 8052) (Clostridium acetobutylicum).